Reading from the N-terminus, the 383-residue chain is Acetylornithine deacetylase (383 aa).

H80 lines the Zn(2+) pocket. Residue D82 is part of the active site. Position 112 (D112) interacts with Zn(2+). E144 is an active-site residue. Zn(2+)-binding residues include E145, E169, and H355.

This sequence belongs to the peptidase M20A family. ArgE subfamily. Homodimer. It depends on Zn(2+) as a cofactor. Requires Co(2+) as cofactor. Glutathione serves as cofactor.

The protein localises to the cytoplasm. The catalysed reaction is N(2)-acetyl-L-ornithine + H2O = L-ornithine + acetate. It functions in the pathway amino-acid biosynthesis; L-arginine biosynthesis; L-ornithine from N(2)-acetyl-L-ornithine (linear): step 1/1. Functionally, catalyzes the hydrolysis of the amide bond of N(2)-acetylated L-amino acids. Cleaves the acetyl group from N-acetyl-L-ornithine to form L-ornithine, an intermediate in L-arginine biosynthesis pathway, and a branchpoint in the synthesis of polyamines. In Shigella flexneri, this protein is Acetylornithine deacetylase.